Here is a 529-residue protein sequence, read N- to C-terminus: Peptide chain release factor 3 (529 aa).

Positions 11-280 (AKRRTFAIIS…GLVEWAPAPM (270 aa)) constitute a tr-type G domain. GTP contacts are provided by residues 20–27 (SHPDAGKT), 88–92 (DTPGH), and 142–145 (NKLD).

The protein belongs to the TRAFAC class translation factor GTPase superfamily. Classic translation factor GTPase family. PrfC subfamily.

It localises to the cytoplasm. Increases the formation of ribosomal termination complexes and stimulates activities of RF-1 and RF-2. It binds guanine nucleotides and has strong preference for UGA stop codons. It may interact directly with the ribosome. The stimulation of RF-1 and RF-2 is significantly reduced by GTP and GDP, but not by GMP. The protein is Peptide chain release factor 3 of Salmonella arizonae (strain ATCC BAA-731 / CDC346-86 / RSK2980).